The sequence spans 229 residues: Uracil-DNA glycosylase (229 aa).

D64 (proton acceptor) is an active-site residue.

Belongs to the uracil-DNA glycosylase (UDG) superfamily. UNG family.

It localises to the cytoplasm. It carries out the reaction Hydrolyzes single-stranded DNA or mismatched double-stranded DNA and polynucleotides, releasing free uracil.. Functionally, excises uracil residues from the DNA which can arise as a result of misincorporation of dUMP residues by DNA polymerase or due to deamination of cytosine. The polypeptide is Uracil-DNA glycosylase (Salmonella arizonae (strain ATCC BAA-731 / CDC346-86 / RSK2980)).